Consider the following 302-residue polypeptide: 33 kDa chaperonin (302 aa).

2 cysteine pairs are disulfide-bonded: Cys-234/Cys-236 and Cys-267/Cys-270.

It belongs to the HSP33 family. Post-translationally, under oxidizing conditions two disulfide bonds are formed involving the reactive cysteines. Under reducing conditions zinc is bound to the reactive cysteines and the protein is inactive.

Its subcellular location is the cytoplasm. Functionally, redox regulated molecular chaperone. Protects both thermally unfolding and oxidatively damaged proteins from irreversible aggregation. Plays an important role in the bacterial defense system toward oxidative stress. This chain is 33 kDa chaperonin, found in Neisseria meningitidis serogroup B (strain ATCC BAA-335 / MC58).